Consider the following 303-residue polypeptide: Diaminopimelate epimerase (303 aa).

Residue asparagine 14 participates in substrate binding. The segment covering 60–74 (PVSSAGATADAAAGR) has biased composition (low complexity). A disordered region spans residues 60–86 (PVSSAGATADAAAGRPPQPSAGRPPQP). The segment covering 75–86 (PPQPSAGRPPQP) has biased composition (pro residues). Position 97 (asparagine 97) interacts with substrate. Cysteine 106 (proton donor) is an active-site residue. Residues 107-108 (GN), asparagine 178, asparagine 209, and 227-228 (ER) each bind substrate. The Proton acceptor role is filled by cysteine 236. 237–238 (GS) is a substrate binding site.

Belongs to the diaminopimelate epimerase family. In terms of assembly, homodimer.

It localises to the cytoplasm. It catalyses the reaction (2S,6S)-2,6-diaminopimelate = meso-2,6-diaminopimelate. It participates in amino-acid biosynthesis; L-lysine biosynthesis via DAP pathway; DL-2,6-diaminopimelate from LL-2,6-diaminopimelate: step 1/1. Functionally, catalyzes the stereoinversion of LL-2,6-diaminopimelate (L,L-DAP) to meso-diaminopimelate (meso-DAP), a precursor of L-lysine and an essential component of the bacterial peptidoglycan. The chain is Diaminopimelate epimerase from Acidothermus cellulolyticus (strain ATCC 43068 / DSM 8971 / 11B).